The chain runs to 179 residues: uncharacterized protein (179 aa).

Residues methionine 1–serine 27 constitute a signal peptide (or 24).

This is an uncharacterized protein from Haemophilus influenzae (strain ATCC 51907 / DSM 11121 / KW20 / Rd).